The chain runs to 39 residues: Neuropeptide F (39 aa).

Residue phenylalanine 39 is modified to Phenylalanine amide.

It belongs to the NPY family. Neuronal somata and fibers.

It localises to the secreted. Functionally, may have an important physiological role in neuroregulation. The chain is Neuropeptide F from Cornu aspersum (Brown garden snail).